The sequence spans 376 residues: uncharacterized protein (376 aa).

It belongs to the glycosyltransferase 28 family.

This is an uncharacterized protein from Methanosarcina mazei (strain ATCC BAA-159 / DSM 3647 / Goe1 / Go1 / JCM 11833 / OCM 88) (Methanosarcina frisia).